Here is a 103-residue protein sequence, read N- to C-terminus: Small ribosomal subunit protein uS10c (103 aa).

The protein belongs to the universal ribosomal protein uS10 family. As to quaternary structure, part of the 30S ribosomal subunit.

It localises to the plastid. It is found in the chloroplast. In terms of biological role, involved in the binding of tRNA to the ribosomes. In Emiliania huxleyi (Coccolithophore), this protein is Small ribosomal subunit protein uS10c.